Here is a 154-residue protein sequence, read N- to C-terminus: Melatonin receptor type 1A (154 aa).

The Cytoplasmic segment spans residues 1–19; that stretch reads YCYICHSLKYDRWYSNRNS. A helical membrane pass occupies residues 20-40; sequence LCCVFLICVLTLVAIVPNLCM. Over 41–62 the chain is Extracellular; sequence GTLQYDPRIYSCTFAQSVSSAY. The helical transmembrane segment at 63–83 threads the bilayer; the sequence is TIAVVVFHFLVPMVIVIFRYL. Residues 84–115 are Cytoplasmic-facing; sequence RIWVLVLQIRWRAKPENNPRLKPQDFRNFVTM. A helical membrane pass occupies residues 116 to 136; it reads FVVFVLFAICWAPLNFIGLAV. At 137–149 the chain is on the extracellular side; that stretch reads ASDPASMAPRIPE.

This sequence belongs to the G-protein coupled receptor 1 family.

The protein resides in the cell membrane. Functionally, high affinity receptor for melatonin. Likely to mediate the reproductive and circadian actions of melatonin. The activity of this receptor is mediated by pertussis toxin sensitive G proteins that inhibit adenylate cyclase activity. The chain is Melatonin receptor type 1A (MTNR1A) from Sus scrofa (Pig).